A 280-amino-acid polypeptide reads, in one-letter code: Cytochrome bc1 complex cytochrome c subunit (280 aa).

The chain crosses the membrane as a helical span at residues 25 to 45 (LSGGVLLLIALTIAGGLAAVL). Cytochrome c domains follow at residues 60–140 (ALLR…QANG) and 161–239 (NDLG…KVAT). Heme c contacts are provided by cysteine 73, cysteine 76, histidine 77, cysteine 174, cysteine 177, and histidine 178. The chain crosses the membrane as a helical span at residues 258–278 (GMAMWIIGMVAAIGLALWIGA).

In terms of assembly, the cytochrome bc1 complex is composed of a cytochrome b (QcrB), the Rieske iron-sulfur protein (QcrA) and a diheme cytochrome c (QcrC) subunit. Post-translationally, binds 2 heme c groups covalently per subunit.

The protein localises to the cell membrane. The enzyme catalyses a quinol + 2 Fe(III)-[cytochrome c](out) = a quinone + 2 Fe(II)-[cytochrome c](out) + 2 H(+)(out). Functionally, cytochrome b subunit of the cytochrome bc1 complex, an essential component of the respiratory electron transport chain required for ATP synthesis. The bc1 complex catalyzes the oxidation of ubiquinol and the reduction of cytochrome c in the respiratory chain. The bc1 complex operates through a Q-cycle mechanism that couples electron transfer to generation of the proton gradient that drives ATP synthesis. The chain is Cytochrome bc1 complex cytochrome c subunit (qcrC) from Mycobacterium bovis (strain ATCC BAA-935 / AF2122/97).